The following is a 408-amino-acid chain: DNA primase DnaG (408 aa).

The Toprim domain occupies 172–248 (DSIIIVEGRA…HVDYIARAPP (77 aa)). 3 residues coordinate Mg(2+): glutamate 178, aspartate 222, and aspartate 224. The segment at 279–304 (AAGEKAETPQQPPPQQPVPQQEVREE) is disordered.

It belongs to the archaeal DnaG primase family. In terms of assembly, forms a ternary complex with MCM helicase and DNA. Component of the archaeal exosome complex. Mg(2+) is required as a cofactor.

It catalyses the reaction ssDNA + n NTP = ssDNA/pppN(pN)n-1 hybrid + (n-1) diphosphate.. Functionally, RNA polymerase that catalyzes the synthesis of short RNA molecules used as primers for DNA polymerase during DNA replication. Also part of the exosome, which is a complex involved in RNA degradation. Acts as a poly(A)-binding protein that enhances the interaction between heteromeric, adenine-rich transcripts and the exosome. The polypeptide is DNA primase DnaG (Pyrobaculum aerophilum (strain ATCC 51768 / DSM 7523 / JCM 9630 / CIP 104966 / NBRC 100827 / IM2)).